The primary structure comprises 739 residues: MPNMEPTTKEIKEQKIYQEMGLTDSEYELVCSILGREPNYTETGLFSVMWSEHCSYKNSKPVLRKFPTEGKQVLQGPGEGAGIVDIGDGLGVAFKVESHNHPSYVEPYQGAATGVGGIIRDVFSMGARPIAMLNSLRFGELDTPHAKYLVSEVVAGIAGYGNSIGIPTVGGEIQFDPCYTKNPLVNAMCVGLIEAKDIQKGQAKGIGNPVMYVGAKTGRDGIHGATFASVEFSEEGEQQRSAVQVGDPFMEKLLLEACLDVIRDHSDILVGIQDMGAAGLVSSSSEMASKAGAGLELIMDDVPQRELHMTPYEMLLSESQERMLLCVKKGHVEEIQALFERYGLEAVVIGKVTDDKMYKIIHHGEVVANVPVDALAEDAPVYHKPSKEPARYQAFQEEDAFVPVIDDVVGVWKELLAQPTIASKRHIYEQYDYQVRTDTAVVPGSDAAIVRVRGTEKAIAMTTDCNSRYLYLDPEVGGAIAVAEAARNIVCSGGKPLAITDGLNFGNPEKPEIFWEIEKAADGISAACLELDTPVISGNVSLYNETDGTGIYPTPVIGMVGLVEDLAHITTQDFKNSGDVIFLIGETKAEYSGSELQKLQQGKISGRAPELDLATEKKYQQLLLTAIQEGLVASSHDLAEGGFGVALAEATFKAGLGADVEVPFELNQLFSESQSRFLVSVKPENEAAFAKLMELEKVYRLGVVTADETIRVKHKEELVTASTSDLRSIWEGAIPCLLK.

His-53 is a catalytic residue. Positions 56 and 95 each coordinate ATP. Residue Glu-97 coordinates Mg(2+). Substrate-binding positions include 98 to 101 (SHNH) and Arg-120. His-99 functions as the Proton acceptor in the catalytic mechanism. Asp-121 lines the Mg(2+) pocket. Substrate is bound at residue Gln-244. Asp-274 serves as a coordination point for Mg(2+). Substrate is bound at residue 318-320 (ESQ). ATP-binding residues include Asp-501 and Gly-538. Asn-539 serves as a coordination point for Mg(2+). Ser-541 lines the substrate pocket.

It belongs to the FGAMS family. In terms of assembly, monomer. Part of the FGAM synthase complex composed of 1 PurL, 1 PurQ and 2 PurS subunits.

The protein localises to the cytoplasm. It catalyses the reaction N(2)-formyl-N(1)-(5-phospho-beta-D-ribosyl)glycinamide + L-glutamine + ATP + H2O = 2-formamido-N(1)-(5-O-phospho-beta-D-ribosyl)acetamidine + L-glutamate + ADP + phosphate + H(+). Its pathway is purine metabolism; IMP biosynthesis via de novo pathway; 5-amino-1-(5-phospho-D-ribosyl)imidazole from N(2)-formyl-N(1)-(5-phospho-D-ribosyl)glycinamide: step 1/2. In terms of biological role, part of the phosphoribosylformylglycinamidine synthase complex involved in the purines biosynthetic pathway. Catalyzes the ATP-dependent conversion of formylglycinamide ribonucleotide (FGAR) and glutamine to yield formylglycinamidine ribonucleotide (FGAM) and glutamate. The FGAM synthase complex is composed of three subunits. PurQ produces an ammonia molecule by converting glutamine to glutamate. PurL transfers the ammonia molecule to FGAR to form FGAM in an ATP-dependent manner. PurS interacts with PurQ and PurL and is thought to assist in the transfer of the ammonia molecule from PurQ to PurL. This chain is Phosphoribosylformylglycinamidine synthase subunit PurL, found in Listeria innocua serovar 6a (strain ATCC BAA-680 / CLIP 11262).